Here is a 562-residue protein sequence, read N- to C-terminus: O-fucosyltransferase 4 (562 aa).

Positions 10 to 46 (SIQNRLPGSDHTTPSPPTSPHLCRSRSKSSSVSGQQQ) are disordered. Over residues 37–46 (KSSSVSGQQQ) the composition is skewed to low complexity. A helical; Signal-anchor for type II membrane protein membrane pass occupies residues 67-87 (GILLFAPIIYISCMLFHLHAA). Residues N122, N146, N185, and N239 are each glycosylated (N-linked (GlcNAc...) asparagine). 332–334 (HLR) contributes to the substrate binding site. 4 N-linked (GlcNAc...) asparagine glycosylation sites follow: N404, N420, N450, and N555.

It belongs to the glycosyltransferase GT106 family.

The protein localises to the membrane. The protein operates within glycan metabolism. The chain is O-fucosyltransferase 4 from Arabidopsis thaliana (Mouse-ear cress).